A 598-amino-acid chain; its full sequence is Elongation factor 4 (598 aa).

A tr-type G domain is found at 2–184; that stretch reads KNIRNFSIIA…RLVKEIPAPE (183 aa). GTP contacts are provided by residues 14 to 19 and 131 to 134; these read DHGKST and NKID.

Belongs to the TRAFAC class translation factor GTPase superfamily. Classic translation factor GTPase family. LepA subfamily.

It is found in the cell inner membrane. It carries out the reaction GTP + H2O = GDP + phosphate + H(+). Required for accurate and efficient protein synthesis under certain stress conditions. May act as a fidelity factor of the translation reaction, by catalyzing a one-codon backward translocation of tRNAs on improperly translocated ribosomes. Back-translocation proceeds from a post-translocation (POST) complex to a pre-translocation (PRE) complex, thus giving elongation factor G a second chance to translocate the tRNAs correctly. Binds to ribosomes in a GTP-dependent manner. The sequence is that of Elongation factor 4 from Proteus mirabilis (strain HI4320).